A 734-amino-acid chain; its full sequence is Photosystem I P700 chlorophyll a apoprotein A2 (734 aa).

Transmembrane regions (helical) follow at residues 46-69 (IFAS…FHVA), 135-158 (LYTG…LHLQ), 175-199 (LNHH…HVAI), 273-291 (IAHH…GHMY), 330-353 (IHFQ…QHMY), 369-395 (AALY…IFFI), 417-439 (AIIS…LYVH), and 517-535 (FLVH…LILV). The [4Fe-4S] cluster site is built by C559 and C568. 2 helical membrane-spanning segments follow: residues 575–596 (AFYL…YWHW) and 643–665 (LSVW…MFLI). Positions 654, 662, and 670 each coordinate chlorophyll a. W671 lines the phylloquinone pocket. Residues 707–727 (LVGLAHFSVGYIFTYAAFLIA) traverse the membrane as a helical segment.

It belongs to the PsaA/PsaB family. In terms of assembly, the PsaA/B heterodimer binds the P700 chlorophyll special pair and subsequent electron acceptors. PSI consists of a core antenna complex that captures photons, and an electron transfer chain that converts photonic excitation into a charge separation. The eukaryotic PSI reaction center is composed of at least 11 subunits. It depends on P700 is a chlorophyll a/chlorophyll a' dimer, A0 is one or more chlorophyll a, A1 is one or both phylloquinones and FX is a shared 4Fe-4S iron-sulfur center. as a cofactor.

Its subcellular location is the plastid. The protein resides in the chloroplast thylakoid membrane. It carries out the reaction reduced [plastocyanin] + hnu + oxidized [2Fe-2S]-[ferredoxin] = oxidized [plastocyanin] + reduced [2Fe-2S]-[ferredoxin]. Functionally, psaA and PsaB bind P700, the primary electron donor of photosystem I (PSI), as well as the electron acceptors A0, A1 and FX. PSI is a plastocyanin-ferredoxin oxidoreductase, converting photonic excitation into a charge separation, which transfers an electron from the donor P700 chlorophyll pair to the spectroscopically characterized acceptors A0, A1, FX, FA and FB in turn. Oxidized P700 is reduced on the lumenal side of the thylakoid membrane by plastocyanin. This chain is Photosystem I P700 chlorophyll a apoprotein A2, found in Saccharum hybrid (Sugarcane).